Here is a 93-residue protein sequence, read N- to C-terminus: Cell division protein CrgA (93 aa).

Transmembrane regions (helical) follow at residues 31–51 (VWFV…LMVF) and 70–90 (LGPW…LLTM).

It belongs to the CrgA family.

The protein localises to the cell membrane. Involved in cell division. The polypeptide is Cell division protein CrgA (Mycobacterium bovis (strain ATCC BAA-935 / AF2122/97)).